A 339-amino-acid polypeptide reads, in one-letter code: Ketol-acid reductoisomerase (NADP(+)) (339 aa).

One can recognise a KARI N-terminal Rossmann domain in the interval 1–182; it reads MRVYYDRDAD…GGGRAGIIET (182 aa). Residues 24-27, Arg48, Ser51, and 83-86 each bind NADP(+); these read YGSQ and DEGQ. The active site involves His108. Gly134 serves as a coordination point for NADP(+). The region spanning 183–328 is the KARI C-terminal knotted domain; the sequence is SFKEEVETDL…EKLRGMMPWI (146 aa). The Mg(2+) site is built by Asp191, Glu195, Glu227, and Glu231. Ser252 provides a ligand contact to substrate.

It belongs to the ketol-acid reductoisomerase family. It depends on Mg(2+) as a cofactor.

The catalysed reaction is (2R)-2,3-dihydroxy-3-methylbutanoate + NADP(+) = (2S)-2-acetolactate + NADPH + H(+). It catalyses the reaction (2R,3R)-2,3-dihydroxy-3-methylpentanoate + NADP(+) = (S)-2-ethyl-2-hydroxy-3-oxobutanoate + NADPH + H(+). It functions in the pathway amino-acid biosynthesis; L-isoleucine biosynthesis; L-isoleucine from 2-oxobutanoate: step 2/4. It participates in amino-acid biosynthesis; L-valine biosynthesis; L-valine from pyruvate: step 2/4. Involved in the biosynthesis of branched-chain amino acids (BCAA). Catalyzes an alkyl-migration followed by a ketol-acid reduction of (S)-2-acetolactate (S2AL) to yield (R)-2,3-dihydroxy-isovalerate. In the isomerase reaction, S2AL is rearranged via a Mg-dependent methyl migration to produce 3-hydroxy-3-methyl-2-ketobutyrate (HMKB). In the reductase reaction, this 2-ketoacid undergoes a metal-dependent reduction by NADPH to yield (R)-2,3-dihydroxy-isovalerate. In Gluconacetobacter diazotrophicus (strain ATCC 49037 / DSM 5601 / CCUG 37298 / CIP 103539 / LMG 7603 / PAl5), this protein is Ketol-acid reductoisomerase (NADP(+)).